Consider the following 406-residue polypeptide: Phosphopentomutase (406 aa).

6 residues coordinate Mn(2+): aspartate 10, aspartate 305, histidine 310, aspartate 346, histidine 347, and histidine 358.

The protein belongs to the phosphopentomutase family. The cofactor is Mn(2+).

The protein localises to the cytoplasm. It carries out the reaction 2-deoxy-alpha-D-ribose 1-phosphate = 2-deoxy-D-ribose 5-phosphate. It catalyses the reaction alpha-D-ribose 1-phosphate = D-ribose 5-phosphate. It participates in carbohydrate degradation; 2-deoxy-D-ribose 1-phosphate degradation; D-glyceraldehyde 3-phosphate and acetaldehyde from 2-deoxy-alpha-D-ribose 1-phosphate: step 1/2. Its function is as follows. Isomerase that catalyzes the conversion of deoxy-ribose 1-phosphate (dRib-1-P) and ribose 1-phosphate (Rib-1-P) to deoxy-ribose 5-phosphate (dRib-5-P) and ribose 5-phosphate (Rib-5-P), respectively. This chain is Phosphopentomutase, found in Vibrio cholerae serotype O1 (strain ATCC 39541 / Classical Ogawa 395 / O395).